The chain runs to 227 residues: Ribose-5-phosphate isomerase A (227 aa).

Substrate is bound by residues 26-29, 82-85, and 95-98; these read TGST, DGAD, and KGGG. The active-site Proton acceptor is Glu-104. Lys-122 contacts substrate.

It belongs to the ribose 5-phosphate isomerase family. Homodimer.

It carries out the reaction aldehydo-D-ribose 5-phosphate = D-ribulose 5-phosphate. The protein operates within carbohydrate degradation; pentose phosphate pathway; D-ribose 5-phosphate from D-ribulose 5-phosphate (non-oxidative stage): step 1/1. In terms of biological role, catalyzes the reversible conversion of ribose-5-phosphate to ribulose 5-phosphate. The protein is Ribose-5-phosphate isomerase A of Streptococcus pneumoniae serotype 4 (strain ATCC BAA-334 / TIGR4).